Reading from the N-terminus, the 473-residue chain is Photosystem II CP43 reaction center protein (473 aa).

A propeptide spanning residues 1 to 14 (MKTLYSLRRFYHVE) is cleaved from the precursor. Thr-15 is subject to N-acetylthreonine. A Phosphothreonine modification is found at Thr-15. The next 5 membrane-spanning stretches (helical) occupy residues 69–93 (LFEV…PHLA), 134–155 (LLGP…KDRN), 178–200 (KALY…RKIT), 255–275 (KPFA…LSYS), and 291–312 (WFNN…ASQA). Residue Glu-367 participates in [CaMn4O5] cluster binding. The chain crosses the membrane as a helical span at residues 447 to 471 (RARAAAAGFEKGIDRDFEPVLSMTP).

The protein belongs to the PsbB/PsbC family. PsbC subfamily. As to quaternary structure, PSII is composed of 1 copy each of membrane proteins PsbA, PsbB, PsbC, PsbD, PsbE, PsbF, PsbH, PsbI, PsbJ, PsbK, PsbL, PsbM, PsbT, PsbX, PsbY, PsbZ, Psb30/Ycf12, at least 3 peripheral proteins of the oxygen-evolving complex and a large number of cofactors. It forms dimeric complexes. Binds multiple chlorophylls and provides some of the ligands for the Ca-4Mn-5O cluster of the oxygen-evolving complex. It may also provide a ligand for a Cl- that is required for oxygen evolution. PSII binds additional chlorophylls, carotenoids and specific lipids. serves as cofactor.

The protein localises to the plastid. It is found in the chloroplast thylakoid membrane. One of the components of the core complex of photosystem II (PSII). It binds chlorophyll and helps catalyze the primary light-induced photochemical processes of PSII. PSII is a light-driven water:plastoquinone oxidoreductase, using light energy to abstract electrons from H(2)O, generating O(2) and a proton gradient subsequently used for ATP formation. The polypeptide is Photosystem II CP43 reaction center protein (Aethionema cordifolium (Lebanon stonecress)).